The primary structure comprises 308 residues: UDP-N-acetylenolpyruvoylglucosamine reductase (308 aa).

Positions 32–197 (QTGGKADYYL…LEAAFTLAPG (166 aa)) constitute an FAD-binding PCMH-type domain. Residue arginine 176 is part of the active site. The active-site Proton donor is the serine 226. Glutamate 296 is a catalytic residue.

Belongs to the MurB family. It depends on FAD as a cofactor.

The protein localises to the cytoplasm. The enzyme catalyses UDP-N-acetyl-alpha-D-muramate + NADP(+) = UDP-N-acetyl-3-O-(1-carboxyvinyl)-alpha-D-glucosamine + NADPH + H(+). The protein operates within cell wall biogenesis; peptidoglycan biosynthesis. Its function is as follows. Cell wall formation. The sequence is that of UDP-N-acetylenolpyruvoylglucosamine reductase from Staphylococcus saprophyticus subsp. saprophyticus (strain ATCC 15305 / DSM 20229 / NCIMB 8711 / NCTC 7292 / S-41).